Here is a 445-residue protein sequence, read N- to C-terminus: Bifunctional protein GlmU (445 aa).

The tract at residues 1-218 (MRALVLAAGK…LLEITGVNTR (218 aa)) is pyrophosphorylase. UDP-N-acetyl-alpha-D-glucosamine-binding positions include 6-9 (LAAG), Lys-20, Gln-69, 74-75 (GT), 96-98 (YGD), Gly-134, Glu-147, Asn-162, and Asn-216. Asp-98 is a binding site for Mg(2+). Asn-216 is a binding site for Mg(2+). Positions 219 to 239 (KTLVWLEEQLRMRKIEELLEN) are linker. An N-acetyltransferase region spans residues 240-445 (GVTILDPATT…GWVLKKRKEE (206 aa)). Arg-321 and Lys-339 together coordinate UDP-N-acetyl-alpha-D-glucosamine. The active-site Proton acceptor is His-351. 2 residues coordinate UDP-N-acetyl-alpha-D-glucosamine: Tyr-354 and Asn-365. Acetyl-CoA is bound by residues Ala-368, 374 to 375 (NY), Ser-393, Ala-411, and Arg-428.

In the N-terminal section; belongs to the N-acetylglucosamine-1-phosphate uridyltransferase family. The protein in the C-terminal section; belongs to the transferase hexapeptide repeat family. Homotrimer. Requires Mg(2+) as cofactor.

It localises to the cytoplasm. It catalyses the reaction alpha-D-glucosamine 1-phosphate + acetyl-CoA = N-acetyl-alpha-D-glucosamine 1-phosphate + CoA + H(+). It carries out the reaction N-acetyl-alpha-D-glucosamine 1-phosphate + UTP + H(+) = UDP-N-acetyl-alpha-D-glucosamine + diphosphate. The protein operates within nucleotide-sugar biosynthesis; UDP-N-acetyl-alpha-D-glucosamine biosynthesis; N-acetyl-alpha-D-glucosamine 1-phosphate from alpha-D-glucosamine 6-phosphate (route II): step 2/2. Its pathway is nucleotide-sugar biosynthesis; UDP-N-acetyl-alpha-D-glucosamine biosynthesis; UDP-N-acetyl-alpha-D-glucosamine from N-acetyl-alpha-D-glucosamine 1-phosphate: step 1/1. It participates in bacterial outer membrane biogenesis; LPS lipid A biosynthesis. In terms of biological role, catalyzes the last two sequential reactions in the de novo biosynthetic pathway for UDP-N-acetylglucosamine (UDP-GlcNAc). The C-terminal domain catalyzes the transfer of acetyl group from acetyl coenzyme A to glucosamine-1-phosphate (GlcN-1-P) to produce N-acetylglucosamine-1-phosphate (GlcNAc-1-P), which is converted into UDP-GlcNAc by the transfer of uridine 5-monophosphate (from uridine 5-triphosphate), a reaction catalyzed by the N-terminal domain. This chain is Bifunctional protein GlmU, found in Thermotoga maritima (strain ATCC 43589 / DSM 3109 / JCM 10099 / NBRC 100826 / MSB8).